The primary structure comprises 349 residues: Probable tRNA pseudouridine synthase B (349 aa).

The active-site Nucleophile is aspartate 41. Residues tyrosine 207–isoleucine 279 form the PUA domain. Positions isoleucine 300–leucine 309 are enriched in basic and acidic residues. A disordered region spans residues isoleucine 300–arginine 349.

This sequence belongs to the pseudouridine synthase TruB family. Type 2 subfamily.

It catalyses the reaction uridine(55) in tRNA = pseudouridine(55) in tRNA. In terms of biological role, could be responsible for synthesis of pseudouridine from uracil-55 in the psi GC loop of transfer RNAs. The chain is Probable tRNA pseudouridine synthase B from Picrophilus torridus (strain ATCC 700027 / DSM 9790 / JCM 10055 / NBRC 100828 / KAW 2/3).